Consider the following 904-residue polypeptide: Protein translocase subunit SecA (904 aa).

ATP-binding positions include Q89, 107–111, and D496; that span reads GEGKT. The tract at residues 870 to 904 is disordered; the sequence is GGFQELSSGTPSPTVTVTTSSGGGTERKTSRRRKR. The segment covering 876 to 889 has biased composition (low complexity); that stretch reads SSGTPSPTVTVTTS.

This sequence belongs to the SecA family. Monomer and homodimer. Part of the essential Sec protein translocation apparatus which comprises SecA, SecYEG and auxiliary proteins SecDF. Other proteins may also be involved.

It localises to the cell inner membrane. It is found in the cytoplasm. It catalyses the reaction ATP + H2O + cellular proteinSide 1 = ADP + phosphate + cellular proteinSide 2.. Functionally, part of the Sec protein translocase complex. Interacts with the SecYEG preprotein conducting channel. Has a central role in coupling the hydrolysis of ATP to the transfer of proteins into and across the cell membrane, serving as an ATP-driven molecular motor driving the stepwise translocation of polypeptide chains across the membrane. In Leptospira borgpetersenii serovar Hardjo-bovis (strain JB197), this protein is Protein translocase subunit SecA.